Consider the following 347-residue polypeptide: Hydroxymethylglutaryl-CoA synthase (347 aa).

Asp29 and Ala30 together coordinate (3S)-3-hydroxy-3-methylglutaryl-CoA. Residue Glu80 is the Proton donor/acceptor of the active site. The (3S)-3-hydroxy-3-methylglutaryl-CoA site is built by Cys112 and Thr153. The Acyl-thioester intermediate role is filled by Cys112. A CoA-binding site is contributed by Arg199. (3S)-3-hydroxy-3-methylglutaryl-CoA is bound by residues Thr201 and His234. Catalysis depends on His234, which acts as the Proton donor/acceptor. Lys239 is a CoA binding site. 3 residues coordinate (3S)-3-hydroxy-3-methylglutaryl-CoA: Arg243, Asn266, and Ser296.

It belongs to the thiolase-like superfamily. Archaeal HMG-CoA synthase family. As to quaternary structure, interacts with acetoacetyl-CoA thiolase that catalyzes the precedent step in the pathway and with a DUF35 protein. The acetoacetyl-CoA thiolase/HMG-CoA synthase complex channels the intermediate via a fused CoA-binding site, which allows for efficient coupling of the endergonic thiolase reaction with the exergonic HMGCS reaction.

It carries out the reaction acetoacetyl-CoA + acetyl-CoA + H2O = (3S)-3-hydroxy-3-methylglutaryl-CoA + CoA + H(+). Its pathway is metabolic intermediate biosynthesis; (R)-mevalonate biosynthesis; (R)-mevalonate from acetyl-CoA: step 2/3. In terms of biological role, catalyzes the condensation of acetyl-CoA with acetoacetyl-CoA to form 3-hydroxy-3-methylglutaryl-CoA (HMG-CoA). Functions in the mevalonate (MVA) pathway leading to isopentenyl diphosphate (IPP), a key precursor for the biosynthesis of isoprenoid compounds that are building blocks of archaeal membrane lipids. This chain is Hydroxymethylglutaryl-CoA synthase, found in Methanocella arvoryzae (strain DSM 22066 / NBRC 105507 / MRE50).